The chain runs to 314 residues: Probable cell division protein WhiA (314 aa).

Positions 277–311 (TLKELGEKMPSGAISKSGINHRLRKLNQLAEGYQQ) form a DNA-binding region, H-T-H motif.

The protein belongs to the WhiA family.

Involved in cell division and chromosome segregation. The chain is Probable cell division protein WhiA from Latilactobacillus sakei subsp. sakei (strain 23K) (Lactobacillus sakei subsp. sakei).